The primary structure comprises 205 residues: Ribonuclease HII (205 aa).

In terms of domain architecture, RNase H type-2 spans 1-205 (MLVCGVDEAG…RPARLIEAGG (205 aa)). Positions 7, 8, and 105 each coordinate a divalent metal cation.

Belongs to the RNase HII family. Mn(2+) serves as cofactor. Requires Mg(2+) as cofactor.

Its subcellular location is the cytoplasm. It catalyses the reaction Endonucleolytic cleavage to 5'-phosphomonoester.. Functionally, endonuclease that specifically degrades the RNA of RNA-DNA hybrids. The protein is Ribonuclease HII of Cenarchaeum symbiosum (strain A).